We begin with the raw amino-acid sequence, 98 residues long: 10 kDa chaperonin (98 aa).

Belongs to the GroES chaperonin family. As to quaternary structure, forms stable complexes with CPN60 in the presence of ATP.

The protein resides in the cytoplasm. Functionally, seems to function only as a co-chaperone, along with cpn60, and in certain cases is essential for the discharge of biologically active proteins from cpn60. The protein is 10 kDa chaperonin of Brassica napus (Rape).